The sequence spans 431 residues: Serine--tRNA ligase (431 aa).

Residue 236-238 (TAE) coordinates L-serine. Residue 267–269 (RSE) coordinates ATP. Glutamate 290 contributes to the L-serine binding site. 354–357 (EISS) lines the ATP pocket. Serine 389 is a binding site for L-serine.

Belongs to the class-II aminoacyl-tRNA synthetase family. Type-1 seryl-tRNA synthetase subfamily. Homodimer. The tRNA molecule binds across the dimer.

It is found in the cytoplasm. The enzyme catalyses tRNA(Ser) + L-serine + ATP = L-seryl-tRNA(Ser) + AMP + diphosphate + H(+). The catalysed reaction is tRNA(Sec) + L-serine + ATP = L-seryl-tRNA(Sec) + AMP + diphosphate + H(+). It participates in aminoacyl-tRNA biosynthesis; selenocysteinyl-tRNA(Sec) biosynthesis; L-seryl-tRNA(Sec) from L-serine and tRNA(Sec): step 1/1. In terms of biological role, catalyzes the attachment of serine to tRNA(Ser). Is also able to aminoacylate tRNA(Sec) with serine, to form the misacylated tRNA L-seryl-tRNA(Sec), which will be further converted into selenocysteinyl-tRNA(Sec). The protein is Serine--tRNA ligase of Janthinobacterium sp. (strain Marseille) (Minibacterium massiliensis).